The chain runs to 940 residues: Isoleucine--tRNA ligase (940 aa).

A 'HIGH' region motif is present at residues 58 to 68 (PYANGDIHIGH). Residue glutamate 564 coordinates L-isoleucyl-5'-AMP. A 'KMSKS' region motif is present at residues 605–609 (KMSKS). Lysine 608 is an ATP binding site. Residues cysteine 903, cysteine 906, cysteine 923, and cysteine 926 each contribute to the Zn(2+) site.

The protein belongs to the class-I aminoacyl-tRNA synthetase family. IleS type 1 subfamily. Monomer. The cofactor is Zn(2+).

The protein localises to the cytoplasm. It catalyses the reaction tRNA(Ile) + L-isoleucine + ATP = L-isoleucyl-tRNA(Ile) + AMP + diphosphate. Its function is as follows. Catalyzes the attachment of isoleucine to tRNA(Ile). As IleRS can inadvertently accommodate and process structurally similar amino acids such as valine, to avoid such errors it has two additional distinct tRNA(Ile)-dependent editing activities. One activity is designated as 'pretransfer' editing and involves the hydrolysis of activated Val-AMP. The other activity is designated 'posttransfer' editing and involves deacylation of mischarged Val-tRNA(Ile). The polypeptide is Isoleucine--tRNA ligase (Shewanella piezotolerans (strain WP3 / JCM 13877)).